The sequence spans 306 residues: Methionyl-tRNA formyltransferase (306 aa).

(6S)-5,6,7,8-tetrahydrofolate is bound at residue 109-112; sequence SILP.

This sequence belongs to the Fmt family.

The catalysed reaction is L-methionyl-tRNA(fMet) + (6R)-10-formyltetrahydrofolate = N-formyl-L-methionyl-tRNA(fMet) + (6S)-5,6,7,8-tetrahydrofolate + H(+). In terms of biological role, attaches a formyl group to the free amino group of methionyl-tRNA(fMet). The formyl group appears to play a dual role in the initiator identity of N-formylmethionyl-tRNA by promoting its recognition by IF2 and preventing the misappropriation of this tRNA by the elongation apparatus. The protein is Methionyl-tRNA formyltransferase of Sphingopyxis alaskensis (strain DSM 13593 / LMG 18877 / RB2256) (Sphingomonas alaskensis).